The chain runs to 2253 residues: Protein Ycf2 (2253 aa).

1600-1607 (GFIGTGRS) lines the ATP pocket.

It belongs to the Ycf2 family.

The protein localises to the plastid. It localises to the chloroplast stroma. In terms of biological role, probable ATPase of unknown function. Its presence in a non-photosynthetic plant (Epifagus virginiana) and experiments in tobacco indicate that it has an essential function which is probably not related to photosynthesis. This chain is Protein Ycf2, found in Nymphaea alba (White water-lily).